Here is a 165-residue protein sequence, read N- to C-terminus: 3-isopropylmalate dehydratase small subunit (165 aa).

It belongs to the LeuD family. LeuD type 2 subfamily. Heterodimer of LeuC and LeuD.

It carries out the reaction (2R,3S)-3-isopropylmalate = (2S)-2-isopropylmalate. The protein operates within amino-acid biosynthesis; L-leucine biosynthesis; L-leucine from 3-methyl-2-oxobutanoate: step 2/4. Its function is as follows. Catalyzes the isomerization between 2-isopropylmalate and 3-isopropylmalate, via the formation of 2-isopropylmaleate. The protein is 3-isopropylmalate dehydratase small subunit of Saccharolobus islandicus (strain M.14.25 / Kamchatka #1) (Sulfolobus islandicus).